The primary structure comprises 524 residues: Peptide chain release factor 3 (524 aa).

The region spanning 10 to 278 (DSRRTFAIIS…TFLQFAPAPH (269 aa)) is the tr-type G domain. GTP is bound by residues 19-26 (SHPDAGKT), 87-91 (DTPGH), and 141-144 (NKLD).

It belongs to the TRAFAC class translation factor GTPase superfamily. Classic translation factor GTPase family. PrfC subfamily.

Its subcellular location is the cytoplasm. Functionally, increases the formation of ribosomal termination complexes and stimulates activities of RF-1 and RF-2. It binds guanine nucleotides and has strong preference for UGA stop codons. It may interact directly with the ribosome. The stimulation of RF-1 and RF-2 is significantly reduced by GTP and GDP, but not by GMP. This Enterococcus faecalis (strain ATCC 700802 / V583) protein is Peptide chain release factor 3.